The chain runs to 289 residues: Small ribosomal subunit protein uS2C (289 aa).

The protein belongs to the universal ribosomal protein uS2 family. In terms of assembly, component of the small ribosomal subunit. Mature ribosomes consist of a small (40S) and a large (60S) subunit. The 40S subunit contains about 33 different proteins and 1 molecule of RNA (18S). The 60S subunit contains about 49 different proteins and 3 molecules of RNA (25S, 5.8S and 5S). Interacts with rps21.

It localises to the cytoplasm. Required for the assembly and/or stability of the 40S ribosomal subunit. Required for the processing of the 20S rRNA-precursor to mature 18S rRNA in a late step of the maturation of 40S ribosomal subunits. This is Small ribosomal subunit protein uS2C (rps0c) from Schizosaccharomyces japonicus (strain yFS275 / FY16936) (Fission yeast).